A 231-amino-acid chain; its full sequence is Phosphatidylserine decarboxylase proenzyme (231 aa).

S188 functions as the Schiff-base intermediate with substrate; via pyruvic acid in the catalytic mechanism. Residue S188 is modified to Pyruvic acid (Ser); by autocatalysis.

It belongs to the phosphatidylserine decarboxylase family. PSD-A subfamily. In terms of assembly, heterodimer of a large membrane-associated beta subunit and a small pyruvoyl-containing alpha subunit. Pyruvate is required as a cofactor. In terms of processing, is synthesized initially as an inactive proenzyme. Formation of the active enzyme involves a self-maturation process in which the active site pyruvoyl group is generated from an internal serine residue via an autocatalytic post-translational modification. Two non-identical subunits are generated from the proenzyme in this reaction, and the pyruvate is formed at the N-terminus of the alpha chain, which is derived from the carboxyl end of the proenzyme. The post-translation cleavage follows an unusual pathway, termed non-hydrolytic serinolysis, in which the side chain hydroxyl group of the serine supplies its oxygen atom to form the C-terminus of the beta chain, while the remainder of the serine residue undergoes an oxidative deamination to produce ammonia and the pyruvoyl prosthetic group on the alpha chain.

It localises to the cell membrane. The catalysed reaction is a 1,2-diacyl-sn-glycero-3-phospho-L-serine + H(+) = a 1,2-diacyl-sn-glycero-3-phosphoethanolamine + CO2. The protein operates within phospholipid metabolism; phosphatidylethanolamine biosynthesis; phosphatidylethanolamine from CDP-diacylglycerol: step 2/2. Functionally, catalyzes the formation of phosphatidylethanolamine (PtdEtn) from phosphatidylserine (PtdSer). The protein is Phosphatidylserine decarboxylase proenzyme of Rickettsia peacockii (strain Rustic).